The primary structure comprises 339 residues: DNA-directed RNA polymerase subunit alpha (339 aa).

The tract at residues Met1–Glu233 is alpha N-terminal domain (alpha-NTD). The alpha C-terminal domain (alpha-CTD) stretch occupies residues Lys267–Lys339.

Belongs to the RNA polymerase alpha chain family. As to quaternary structure, in plastids the minimal PEP RNA polymerase catalytic core is composed of four subunits: alpha, beta, beta', and beta''. When a (nuclear-encoded) sigma factor is associated with the core the holoenzyme is formed, which can initiate transcription.

It localises to the plastid. The protein resides in the chloroplast. The catalysed reaction is RNA(n) + a ribonucleoside 5'-triphosphate = RNA(n+1) + diphosphate. DNA-dependent RNA polymerase catalyzes the transcription of DNA into RNA using the four ribonucleoside triphosphates as substrates. In Piper cenocladum (Ant piper), this protein is DNA-directed RNA polymerase subunit alpha.